The following is a 179-amino-acid chain: Dual-action ribosomal maturation protein DarP (179 aa).

It belongs to the DarP family.

It localises to the cytoplasm. Functionally, member of a network of 50S ribosomal subunit biogenesis factors which assembles along the 30S-50S interface, preventing incorrect 23S rRNA structures from forming. Promotes peptidyl transferase center (PTC) maturation. In Photorhabdus laumondii subsp. laumondii (strain DSM 15139 / CIP 105565 / TT01) (Photorhabdus luminescens subsp. laumondii), this protein is Dual-action ribosomal maturation protein DarP.